Here is a 230-residue protein sequence, read N- to C-terminus: Putative N-acetylmannosamine-6-phosphate 2-epimerase (230 aa).

Belongs to the NanE family.

The catalysed reaction is an N-acyl-D-glucosamine 6-phosphate = an N-acyl-D-mannosamine 6-phosphate. It functions in the pathway amino-sugar metabolism; N-acetylneuraminate degradation; D-fructose 6-phosphate from N-acetylneuraminate: step 3/5. Its function is as follows. Converts N-acetylmannosamine-6-phosphate (ManNAc-6-P) to N-acetylglucosamine-6-phosphate (GlcNAc-6-P). This Malacoplasma penetrans (strain HF-2) (Mycoplasma penetrans) protein is Putative N-acetylmannosamine-6-phosphate 2-epimerase.